The following is a 438-amino-acid chain: Death-associated inhibitor of apoptosis 1 (438 aa).

One copy of the BIR 1 repeat lies at 44–110 (EETRLKTFTD…QRWSPNCPLL (67 aa)). A disordered region spans residues 194-213 (TATQATGDVQPETCRPSAAS). A BIR 2 repeat occupies 226-293 (ETARLRTFEA…ALWLSQCRFV (68 aa)). Residues Cys263, Cys266, His283, and Cys290 each contribute to the Zn(2+) site. The interval 322–346 (GGVAVASTQASEEEQQTSLSSEEAV) is disordered. Positions 327–345 (ASTQASEEEQQTSLSSEEA) are enriched in low complexity. The RING-type zinc finger occupies 391–426 (CKICYGAEYNTAFLPCGHVVACAKCASSVTKCPLCR).

It belongs to the IAP family. Interacts (via BIR 2 domain) with Dronc (via residues 114-125). Rpr, hid and grim can outcompete Dronc for binding Diap1 therefore removing Diap1-mediated ubiquitination. Interacts (via BIR 2 domain) with HtrA2; this displaces any bound Dronc. Interacts with Strica. The N-terminally cleaved form interacts with Ubr3 (via UBR-type zinc finger); the interaction promotes the recruitment and uniquitination of substrate capases such as Dronc. Post-translationally, ubiquitinated and degraded by HtrA2 in apoptotic cells; proteolytic cleavage at specific sites in the BIR domain linker region generating inactive fragments. Mutation of one site reduces but does not abolish cleavage as another site is selected by the protease.

It carries out the reaction S-ubiquitinyl-[E2 ubiquitin-conjugating enzyme]-L-cysteine + [acceptor protein]-L-lysine = [E2 ubiquitin-conjugating enzyme]-L-cysteine + N(6)-ubiquitinyl-[acceptor protein]-L-lysine.. In terms of biological role, anti-apoptotic protein which functions as a caspase regulator, using its E3 ubiquitin-protein ligase activity to smother caspase activity. Binds, ubiquitinates and inactivates initiator caspase Dronc, and effector caspases Drice and Dcp-1. Acts as a Nedd8-E3 ubiquitin-protein ligase for Drice. Suppresses apoptosis by targeting the apoptosome for ubiquitination and inactivation. Plays an important role in cell motility. Overexpression suppresses rpr and hid-dependent cell death in the eye. Interaction of Diap1 with Dronc is required to suppress Dronc-mediated cell death through Diap1-mediated ubiquitination of Dronc. Acts as a positive regulator of Wnt signaling. This is Death-associated inhibitor of apoptosis 1 (Diap1) from Drosophila melanogaster (Fruit fly).